The following is a 272-amino-acid chain: Neurogenin-2 (272 aa).

The interval 30-69 (LTPLSSSADEEEEEEPGASGGARRQRGAEAGQGARGGVAA) is disordered. Residues 112 to 164 (TRRLKANNRERNRMHNLNAALDALREVLPTFPEDAKLTKIETLRFAHNYIWAL) form the bHLH domain. Residues 197–239 (ASAALSSSGDSPSPASTWSCTNSPAPSSSVSSNSTSPYSCTLS) are compositionally biased toward low complexity. The tract at residues 197-264 (ASAALSSSGD…PPDKHRYAPH (68 aa)) is disordered.

As to quaternary structure, efficient DNA binding requires dimerization with another bHLH protein.

The protein localises to the nucleus. In terms of biological role, transcriptional regulator. Involved in neuronal differentiation. Activates transcription by binding to the E box (5'-CANNTG-3'). The sequence is that of Neurogenin-2 (NEUROG2) from Homo sapiens (Human).